A 1098-amino-acid chain; its full sequence is uncharacterized protein (1098 aa).

This is an uncharacterized protein from Invertebrate iridescent virus 3 (IIV-3).